We begin with the raw amino-acid sequence, 117 residues long: Protein Wnt-10b (117 aa).

A lipid anchor (O-palmitoleoyl serine; by PORCN) is attached at Ser1. Cys83 and Cys98 are joined by a disulfide. Asn84 carries N-linked (GlcNAc...) asparagine glycosylation.

It belongs to the Wnt family. Post-translationally, palmitoleoylation is required for efficient binding to frizzled receptors. Depalmitoleoylation leads to Wnt signaling pathway inhibition.

Its subcellular location is the secreted. The protein resides in the extracellular space. It localises to the extracellular matrix. Its function is as follows. Member of the Wnt ligand gene family that encodes for secreted proteins, which activate the Wnt signaling cascade. Involved in neurogenesis. Performs a partially redundant function with wnt1 in the formation of the midbrain-hindbrain boundary (MHB) organizer. In Plethodon jordani (Red-cheeked salamander), this protein is Protein Wnt-10b (WNT-10B).